A 326-amino-acid chain; its full sequence is Malate dehydrogenase (326 aa).

12–18 (GGTGQIA) provides a ligand contact to NAD(+). The substrate site is built by arginine 93 and arginine 99. NAD(+)-binding positions include asparagine 106, glutamine 113, and 130–132 (VGN). Substrate-binding residues include asparagine 132 and arginine 163. The Proton acceptor role is filled by histidine 188.

The protein belongs to the LDH/MDH superfamily. MDH type 2 family.

The catalysed reaction is (S)-malate + NAD(+) = oxaloacetate + NADH + H(+). Catalyzes the reversible oxidation of malate to oxaloacetate. In Chlamydia trachomatis serovar L2 (strain ATCC VR-902B / DSM 19102 / 434/Bu), this protein is Malate dehydrogenase.